Here is a 131-residue protein sequence, read N- to C-terminus: Profilin-4 (131 aa).

An intrachain disulfide couples Cys-13 to Cys-115. The short motif at 81 to 97 is the Involved in PIP2 interaction element; that stretch reads AVIRGKKGAGGITVKKT. Residue Thr-111 is modified to Phosphothreonine.

Belongs to the profilin family. Occurs in many kinds of cells as a complex with monomeric actin in a 1:1 ratio. Post-translationally, phosphorylated by MAP kinases.

Its subcellular location is the cytoplasm. The protein resides in the cytoskeleton. Functionally, binds to actin and affects the structure of the cytoskeleton. At high concentrations, profilin prevents the polymerization of actin, whereas it enhances it at low concentrations. In Olea europaea (Common olive), this protein is Profilin-4.